Consider the following 288-residue polypeptide: ATP synthase gamma chain (288 aa).

The protein belongs to the ATPase gamma chain family. F-type ATPases have 2 components, CF(1) - the catalytic core - and CF(0) - the membrane proton channel. CF(1) has five subunits: alpha(3), beta(3), gamma(1), delta(1), epsilon(1). CF(0) has three main subunits: a, b and c.

It is found in the cell inner membrane. Its function is as follows. Produces ATP from ADP in the presence of a proton gradient across the membrane. The gamma chain is believed to be important in regulating ATPase activity and the flow of protons through the CF(0) complex. This Rickettsia bellii (strain OSU 85-389) protein is ATP synthase gamma chain.